The chain runs to 1119 residues: Period circadian protein homolog 3 (1119 aa).

Residues 1-48 (MDPCGNPAVPGGDCPQTRGPGLQGSSGQEGPLQGICVDSSHSEHEDRN) form a disordered region. A Nuclear export signal 1 motif is present at residues 54 to 63 (LIMVVQEMKK). PAS domains lie at 120–187 (LASE…PTQL) and 259–325 (YEAP…KVLK). The 44-residue stretch at 334 to 377 (HSPIRFCTQNGDYVILDSSWSSFVNPWSRKVSFIIGRHKVRTSP) folds into the PAC domain. The short motif at 400 to 409 (LQEQIHRLLL) is the Nuclear export signal 3 element. Over residues 419–428 (GYGSLGSSGS) the composition is skewed to low complexity. Disordered stretches follow at residues 419–449 (GYGS…VEEA), 483–530 (VKPV…SSSY), 718–744 (HSRC…SSSS), and 878–910 (LEPT…SRSS). Polar residues-rich tracts occupy residues 429–442 (QEQH…SESS) and 491–515 (TEPQ…STDT). Positions 551-750 (LKRKCISCTN…SSSSAHLCPH (200 aa)) are CSNK1E binding domain. The Nuclear localization signal signature appears at 720–739 (RCAGSERRKHKRKKLPTPVD). The span at 885–903 (HGPRRVEENWETHSEEEHP) shows a compositional bias: basic and acidic residues. A Phosphoserine modification is found at Ser907. Residues 913–920 (LQLNLLQE) carry the Nuclear export signal 2 motif. Positions 947–1011 (GNSGSRSPPC…QDTHRDRAFS (65 aa)) are disordered. The segment covering 970 to 988 (SPSAAASGSSASSVHGSGS) has biased composition (low complexity). Over residues 989–1001 (DYTSEVSENGQRS) the composition is skewed to polar residues. The interval 1037–1119 (ERGRDTVLRE…VQQKTPVEQL (83 aa)) is CRY binding domain.

As to quaternary structure, homodimer. Component of the circadian core oscillator, which includes the CRY proteins, CLOCK or NPAS2, BMAL1 or BMAL2, CSNK1D and/or CSNK1E, TIMELESS and the PER proteins. Interacts directly with PER1, PER2, CRY1, CRY2, and TIMELESS; interaction with CRY1 and CRY2 is weak and not rhythmic. Interacts with FBXW11 and BTRC. Post-translationally, phosphorylation by CSNK1E is weak and appears to require association with PER1 and translocation to the nucleus. In terms of processing, ubiquitinated.

Its subcellular location is the cytoplasm. The protein resides in the nucleus. Functionally, originally described as a core component of the circadian clock. The circadian clock, an internal time-keeping system, regulates various physiological processes through the generation of approximately 24 hour circadian rhythms in gene expression, which are translated into rhythms in metabolism and behavior. It is derived from the Latin roots 'circa' (about) and 'diem' (day) and acts as an important regulator of a wide array of physiological functions including metabolism, sleep, body temperature, blood pressure, endocrine, immune, cardiovascular, and renal function. Consists of two major components: the central clock, residing in the suprachiasmatic nucleus (SCN) of the brain, and the peripheral clocks that are present in nearly every tissue and organ system. Both the central and peripheral clocks can be reset by environmental cues, also known as Zeitgebers (German for 'timegivers'). The predominant Zeitgeber for the central clock is light, which is sensed by retina and signals directly to the SCN. The central clock entrains the peripheral clocks through neuronal and hormonal signals, body temperature and feeding-related cues, aligning all clocks with the external light/dark cycle. Circadian rhythms allow an organism to achieve temporal homeostasis with its environment at the molecular level by regulating gene expression to create a peak of protein expression once every 24 hours to control when a particular physiological process is most active with respect to the solar day. Transcription and translation of core clock components (CLOCK, NPAS2, BMAL1, BMAL2, PER1, PER2, PER3, CRY1 and CRY2) plays a critical role in rhythm generation, whereas delays imposed by post-translational modifications (PTMs) are important for determining the period (tau) of the rhythms (tau refers to the period of a rhythm and is the length, in time, of one complete cycle). A diurnal rhythm is synchronized with the day/night cycle, while the ultradian and infradian rhythms have a period shorter and longer than 24 hours, respectively. Disruptions in the circadian rhythms contribute to the pathology of cardiovascular diseases, cancer, metabolic syndromes and aging. A transcription/translation feedback loop (TTFL) forms the core of the molecular circadian clock mechanism. Transcription factors, CLOCK or NPAS2 and BMAL1 or BMAL2, form the positive limb of the feedback loop, act in the form of a heterodimer and activate the transcription of core clock genes and clock-controlled genes (involved in key metabolic processes), harboring E-box elements (5'-CACGTG-3') within their promoters. The core clock genes: PER1/2/3 and CRY1/2 which are transcriptional repressors form the negative limb of the feedback loop and interact with the CLOCK|NPAS2-BMAL1|BMAL2 heterodimer inhibiting its activity and thereby negatively regulating their own expression. This heterodimer also activates nuclear receptors NR1D1, NR1D2, RORA, RORB and RORG, which form a second feedback loop and which activate and repress BMAL1 transcription, respectively. Has a redundant role with the other PER proteins PER1 and PER2 and is not essential for the circadian rhythms maintenance. In contrast, plays an important role in sleep-wake timing and sleep homeostasis probably through the transcriptional regulation of sleep homeostasis-related genes, without influencing circadian parameters. Can bind heme. The polypeptide is Period circadian protein homolog 3 (Per3) (Rattus norvegicus (Rat)).